A 485-amino-acid chain; its full sequence is Pre-glycoprotein polyprotein GP complex (485 aa).

The N-myristoyl glycine; by host moiety is linked to residue glycine 2. Topologically, residues 2–17 (GQFISFMQEIPTFLQE) are extracellular. The helical transmembrane segment at 18–33 (ALNIALVAVSLIAIIK) threads the bilayer. The Cytoplasmic segment spans residues 34-58 (GVVNLYKSGLFQFFVFLALAGRSCT). Position 57 (cysteine 57) interacts with Zn(2+). Residues 59-424 (EEAFKIGLHT…QGKTPLTLVD (366 aa)) are Extracellular-facing. Disulfide bonds link cysteine 92–cysteine 226, cysteine 135–cysteine 164, cysteine 207–cysteine 213, cysteine 271–cysteine 284, cysteine 293–cysteine 302, and cysteine 356–cysteine 377. Residues asparagine 95 and asparagine 105 are each glycosylated (N-linked (GlcNAc...) asparagine; by host). 2 N-linked (GlcNAc...) asparagine; by host glycosylation sites follow: asparagine 166 and asparagine 178. Positions 250 to 286 (LKAFFSWSLTDSSGKDTPGGYCLEEWMLVAAKMKCFG) are fusion. Residues 287–355 (NTAVAKCNLN…KIRELMSVPY (69 aa)) are HR1. N-linked (GlcNAc...) asparagine; by host glycans are attached at residues asparagine 357, asparagine 365, asparagine 382, and asparagine 387. The interval 360–423 (KFWYVNHTLS…RQGKTPLTLV (64 aa)) is HR2. The helical transmembrane segment at 425–445 (ICFWSTVFFTASLFLHLVGIP) threads the bilayer. Topologically, residues 446–485 (THRHIRGEACPLPHRLNSLGGCRCGKYPNLKKPTVWRRGH) are cytoplasmic. Residues histidine 447, histidine 449, cysteine 455, histidine 459, cysteine 467, cysteine 469, and histidine 485 each coordinate Zn(2+).

Belongs to the arenaviridae GPC protein family. As to quaternary structure, interacts with glycoprotein G2. Part of the GP complex (GP-C) together with glycoprotein G1 and glycoprotein G2. The GP-complex interacts with protein Z, which interacts with ribonucleocapsid; these interactions may induce virion budding. Homotrimer; disulfide-linked. In pre-fusion state, G1 homotrimers bind G2 homotrimers via ionic interactions. Part of the GP complex (GP-C) together with glycoprotein G2 and the stable signal peptide. Interacts with host TFRC. The GP-complex interacts with protein Z, which interacts with ribonucleocapsid; these interactions may induce virion budding. In terms of assembly, homotrimer. Interacts with the stable signal peptide. In pre-fusion state, G2 homotrimers bind G1 homotrimers via ionic interactions. Part of the GP complex (GP-C) together with glycoprotein G1 and the stable signal peptide. Acidification in the endosome triggers rearrangements, which ultimately leads to a 6 helix bundle formed by the two heptad repeat domains (HR1 and HR2) in post-fusion state. The GP-complex interacts with protein Z, which interacts with ribonucleocapsid; these interactions may induce virion budding. Specific enzymatic cleavages in vivo yield mature proteins. GP-C polyprotein is cleaved in the endoplasmic reticulum by the host protease MBTPS1. Only cleaved glycoprotein is incorporated into virions. Post-translationally, the SSP remains stably associated with the GP complex following cleavage by signal peptidase and plays crucial roles in the trafficking of GP through the secretory pathway. In terms of processing, myristoylation is necessary for GP2-mediated fusion activity.

It is found in the virion membrane. The protein localises to the host endoplasmic reticulum membrane. Its subcellular location is the host Golgi apparatus membrane. The protein resides in the host cell membrane. Functions as a cleaved signal peptide that is retained as the third component of the GP complex (GP-C). Helps to stabilize the spike complex in its native conformation. The SSP is required for efficient glycoprotein expression, post-translational maturation cleavage of G1 and G2, glycoprotein transport to the cell surface plasma membrane, formation of infectious virus particles, and acid pH-dependent glycoprotein-mediated cell fusion. In terms of biological role, forms the virion spikes together with glycoprotein G2. The glycoprotein spike trimers are connected to the underlying matrix. Mediates virus attachment to host TFRC. This attachment induces virion internalization predominantly through clathrin-mediated endocytosis. Functionally, forms the virion spikes together with glycoprotein G1. The glycoprotein spike trimers are connected to the underlying matrix. Class I viral fusion protein that directs fusion of viral and host endosomal membranes, leading to delivery of the nucleocapsid into the cytoplasm. Membrane fusion is mediated by irreversible conformational changes induced by acidification. This chain is Pre-glycoprotein polyprotein GP complex, found in Junin mammarenavirus (JUNV).